The chain runs to 328 residues: Nitrilase (328 aa).

One can recognise a CN hydrolase domain in the interval 9–286 (VRVAAIQAEP…EGILYANVDV (278 aa)). The Proton acceptor role is filled by E49. K131 is a catalytic residue. Residue C166 is the Nucleophile of the active site.

This sequence belongs to the carbon-nitrogen hydrolase superfamily. Nitrilase family.

The enzyme catalyses a nitrile + 2 H2O = a carboxylate + NH4(+). Its function is as follows. Nitrilase that hydrolyzes preferentially 4-cyanopyridine. Is also able to hydrolyze some aliphatic nitriles, such as (R,S)-mandelonitrile. This chain is Nitrilase, found in Penicillium rubens (strain ATCC 28089 / DSM 1075 / NRRL 1951 / Wisconsin 54-1255) (Penicillium chrysogenum).